The primary structure comprises 603 residues: DNA mismatch repair protein MutL (603 aa).

Residues Lys-361 to Pro-383 are disordered.

It belongs to the DNA mismatch repair MutL/HexB family.

Its function is as follows. This protein is involved in the repair of mismatches in DNA. It is required for dam-dependent methyl-directed DNA mismatch repair. May act as a 'molecular matchmaker', a protein that promotes the formation of a stable complex between two or more DNA-binding proteins in an ATP-dependent manner without itself being part of a final effector complex. The sequence is that of DNA mismatch repair protein MutL from Listeria monocytogenes serotype 4b (strain CLIP80459).